The sequence spans 510 residues: Sucrose transport protein SUC4 (510 aa).

The segment at 1–34 (MATSDQDRRHRVTRNRPPIARPSTSSSRPVVSPP) is disordered. The Cytoplasmic segment spans residues 1–45 (MATSDQDRRHRVTRNRPPIARPSTSSSRPVVSPPRSKVSKRVLLR). Positions 21-34 (RPSTSSSRPVVSPP) are enriched in low complexity. Residue Ser-23 is modified to Phosphoserine. A helical transmembrane segment spans residues 46 to 66 (VASVACGIQFGWALQLSLLTP). The Extracellular portion of the chain corresponds to 67 to 71 (YVQEL). A helical membrane pass occupies residues 72 to 92 (GIPHAWASVIWLCGPLSGLFV). Residues 93 to 111 (QPLVGHSSDRCTSKYGRRR) lie on the Cytoplasmic side of the membrane. The helical transmembrane segment at 112–132 (PFIVAGAVAISISVMVIGHAA) threads the bilayer. The Extracellular segment spans residues 133–148 (DIGWAFGDREGKIKPR). Residues 149-169 (AIVAFVLGFWILDVANNMTQG) form a helical membrane-spanning segment. At 170–187 (PCRALLADLTENDNRRTR) the chain is on the cytoplasmic side. The helical transmembrane segment at 188–208 (VANGYFSLFMAVGNVLGYATG) threads the bilayer. The Extracellular segment spans residues 209 to 233 (SYNGWYKIFTFTKTVACNVECANLK). The helical transmembrane segment at 234 to 254 (SAFYIDVVFIAITTILSVSAA) threads the bilayer. Residues 255–291 (HEVPLASLASEAHGQTSGTDEAFLSEIFGTFRYFPGN) lie on the Cytoplasmic side of the membrane. The chain crosses the membrane as a helical span at residues 292–312 (VWIILLVTALTWIGWFPFILF). The Extracellular portion of the chain corresponds to 313-335 (DTDWMGREIYGGEPNIGTSYSAG). The chain crosses the membrane as a helical span at residues 336 to 356 (VSMGALGLMLNSVFLGITSVL). Topologically, residues 357–365 (MEKLCRKWG) are cytoplasmic. The helical transmembrane segment at 366 to 386 (AGFVWGISNILMAICFLGMII) threads the bilayer. Over 387–402 (TSFVASHLGYIGHEQP) the chain is Extracellular. The helical transmembrane segment at 403-423 (PASIVFAAVLIFTILGIPLAI) threads the bilayer. Residues 424-443 (TYSVPYALISIRIESLGLGQ) lie on the Cytoplasmic side of the membrane. Residues 444 to 464 (GLSLGVLNLAIVIPQVIVSVG) traverse the membrane as a helical segment. Residues 465 to 477 (SGPWDQLFGGGNS) lie on the Extracellular side of the membrane. The chain crosses the membrane as a helical span at residues 478–498 (PALAVGAATGFIGGIVAILAL). Residues 499 to 510 (PRTRIQKPIPLP) lie on the Cytoplasmic side of the membrane.

The protein belongs to the glycoside-pentoside-hexuronide (GPH) cation symporter transporter (TC 2.A.2.4) family. Homodimer. Interacts with SUC2 and SUC3. Expressed in sink tissues, mostly in minor veins of sink leaves. Localized in companion cells.

The protein localises to the cell membrane. It catalyses the reaction sucrose(out) + H(+)(out) = sucrose(in) + H(+)(in). The protein operates within glycan biosynthesis; sucrose metabolism. In terms of biological role, responsible for the transport of sucrose into the cell, with the concomitant uptake of protons (symport system). Can also transport maltose at a lesser rate. May also transport biotin. The chain is Sucrose transport protein SUC4 from Arabidopsis thaliana (Mouse-ear cress).